Consider the following 56-residue polypeptide: Prokaryotic ubiquitin-like protein UBact (56 aa).

Residues 1–56 (MPERIVKPMPQDPVTKPGDEGPRTPNVPKPDTERLLERMRRVDPRQAQRYRQRSGE) are disordered. Positions 30–46 (PDTERLLERMRRVDPRQ) are enriched in basic and acidic residues. E56 participates in a covalent cross-link: Isoglutamyl lysine isopeptide (Glu-Lys) (interchain with K-? in acceptor proteins).

This sequence belongs to the ubiquitin-like protein UBact family.

In terms of biological role, may function as a protein modifier covalently attached to lysine residues of substrate proteins. This may serve to target the modified proteins for degradation by proteasomes. This is Prokaryotic ubiquitin-like protein UBact from Acetithermum autotrophicum.